A 241-amino-acid polypeptide reads, in one-letter code: Methylthioribulose-1-phosphate dehydratase (241 aa).

Position 100 (Cys100) interacts with substrate. Residues His117 and His119 each contribute to the Zn(2+) site. Glu146 (proton donor/acceptor) is an active-site residue. His202 contributes to the Zn(2+) binding site.

Belongs to the aldolase class II family. MtnB subfamily. It depends on Zn(2+) as a cofactor.

It localises to the cytoplasm. It catalyses the reaction 5-(methylsulfanyl)-D-ribulose 1-phosphate = 5-methylsulfanyl-2,3-dioxopentyl phosphate + H2O. The protein operates within amino-acid biosynthesis; L-methionine biosynthesis via salvage pathway; L-methionine from S-methyl-5-thio-alpha-D-ribose 1-phosphate: step 2/6. In terms of biological role, catalyzes the dehydration of methylthioribulose-1-phosphate (MTRu-1-P) into 2,3-diketo-5-methylthiopentyl-1-phosphate (DK-MTP-1-P). The protein is Methylthioribulose-1-phosphate dehydratase of Ajellomyces dermatitidis (strain ER-3 / ATCC MYA-2586) (Blastomyces dermatitidis).